A 274-amino-acid polypeptide reads, in one-letter code: SWI/SNF chromatin-remodeling complex subunit snf30 (274 aa).

Polar residues-rich tracts occupy residues 123–150 (TLSY…GTMQ) and 157–167 (PSLTRSDSVSS). The tract at residues 123-167 (TLSYPPSNGDSSSYANGTDLHGNTGTMQQEEKANPSLTRSDSVSS) is disordered.

Component of the SWI/SNF global transcription activator complex composed of at least arp9, arp42, snf5, snf22, snf30, sbf59, sol1, ssr1, ssr2, ssr3, ssr4 and tfg3.

The protein localises to the cytoplasm. Its subcellular location is the nucleus. Component of the SWI/SNF complex, an ATP-dependent chromatin remodeling complex, required for the positive and negative regulation of gene expression of a large number of genes. It changes chromatin structure by altering DNA-histone contacts within a nucleosome, leading eventually to a change in nucleosome position, thus facilitating or repressing binding of gene-specific transcription factors. The chain is SWI/SNF chromatin-remodeling complex subunit snf30 (snf30) from Schizosaccharomyces pombe (strain 972 / ATCC 24843) (Fission yeast).